Reading from the N-terminus, the 247-residue chain is ATP synthase subunit a, chloroplastic (247 aa).

5 consecutive transmembrane segments (helical) span residues 38-58 (QVLITSWVVIAILLGSAALAV), 95-115 (VPFIGTMFLFIFVSNWSGALL), 134-154 (INTTVALALLTSVAYFYAGLT), 199-219 (LVVVVLVSLVPSVVPIPVMFL), and 220-240 (GLFTSGIQALIFATLAAAYIG).

Belongs to the ATPase A chain family. In terms of assembly, F-type ATPases have 2 components, CF(1) - the catalytic core - and CF(0) - the membrane proton channel. CF(1) has five subunits: alpha(3), beta(3), gamma(1), delta(1), epsilon(1). CF(0) has four main subunits: a, b, b' and c.

It is found in the plastid. Its subcellular location is the chloroplast thylakoid membrane. Key component of the proton channel; it plays a direct role in the translocation of protons across the membrane. The sequence is that of ATP synthase subunit a, chloroplastic from Helianthus annuus (Common sunflower).